We begin with the raw amino-acid sequence, 209 residues long: NADH-quinone oxidoreductase subunit C (209 aa).

Belongs to the complex I 30 kDa subunit family. NDH-1 is composed of 14 different subunits. Subunits NuoB, C, D, E, F, and G constitute the peripheral sector of the complex.

The protein resides in the cell inner membrane. The catalysed reaction is a quinone + NADH + 5 H(+)(in) = a quinol + NAD(+) + 4 H(+)(out). Functionally, NDH-1 shuttles electrons from NADH, via FMN and iron-sulfur (Fe-S) centers, to quinones in the respiratory chain. The immediate electron acceptor for the enzyme in this species is believed to be ubiquinone. Couples the redox reaction to proton translocation (for every two electrons transferred, four hydrogen ions are translocated across the cytoplasmic membrane), and thus conserves the redox energy in a proton gradient. The chain is NADH-quinone oxidoreductase subunit C from Bordetella petrii (strain ATCC BAA-461 / DSM 12804 / CCUG 43448).